A 614-amino-acid chain; its full sequence is ATP-dependent zinc metalloprotease FtsH (614 aa).

The Stromal segment spans residues 1–7 (MKKQWKK). A helical membrane pass occupies residues 8-28 (IVLFVLPVIITLITLSSFLFY). At 29–116 (NQDVVHNWSS…AHPSSSNVNL (88 aa)) the chain is on the lumenal side. The helical transmembrane segment at 117 to 137 (VSWLSNLLLPLILIITLFFFF) threads the bilayer. Topologically, residues 138 to 614 (RRGNKSSSGP…EFMRIVEERV (477 aa)) are stromal. 211–218 (GPPGTGKT) provides a ligand contact to ATP. Histidine 432 serves as a coordination point for Zn(2+). Glutamate 433 is a catalytic residue. The Zn(2+) site is built by histidine 436 and aspartate 510.

It in the central section; belongs to the AAA ATPase family. This sequence in the C-terminal section; belongs to the peptidase M41 family. In terms of assembly, homohexamer. The cofactor is Zn(2+).

The protein localises to the plastid. The protein resides in the chloroplast thylakoid membrane. Functionally, acts as a processive, ATP-dependent zinc metallopeptidase. The chain is ATP-dependent zinc metalloprotease FtsH from Cyanidium caldarium (Red alga).